Reading from the N-terminus, the 93-residue chain is Phosphoribosyl-ATP pyrophosphatase (93 aa).

It belongs to the PRA-PH family.

It localises to the cytoplasm. The catalysed reaction is 1-(5-phospho-beta-D-ribosyl)-ATP + H2O = 1-(5-phospho-beta-D-ribosyl)-5'-AMP + diphosphate + H(+). It functions in the pathway amino-acid biosynthesis; L-histidine biosynthesis; L-histidine from 5-phospho-alpha-D-ribose 1-diphosphate: step 2/9. This is Phosphoribosyl-ATP pyrophosphatase from Mycobacterium leprae (strain Br4923).